A 71-amino-acid polypeptide reads, in one-letter code: Stathmin-1-B (71 aa).

Residues 1–67 (KREHEKEVLQ…EIRKGKECKE (67 aa)) adopt a coiled-coil conformation. Residues 1 to 71 (KREHEKEVLQ…GKECKEPSED (71 aa)) enclose the SLD domain.

This sequence belongs to the stathmin family. Binds to two alpha/beta-tubulin heterodimers. From unphosphorylated forms to highly phosphorylated ones in the mature egg, followed by progressive dephosphorylation from the mid-blastula to the tailbud stage. Ubiquitous. Mostly abundant in brain and oocytes.

Its subcellular location is the cytoplasm. It is found in the cytoskeleton. Involved in the regulation of the microtubule (MT) filament system by destabilizing microtubules. It prevents assembly and promotes disassembly of microtubules. The protein is Stathmin-1-B (stmn1-b) of Xenopus laevis (African clawed frog).